Consider the following 255-residue polypeptide: MKRLNKLVLGIIFLFLVISITAGCGIGKEAEVKKSFEKTLSMYPIKNLEDLYDKEGYRDDQFDKNDKGTWIINSEMVIQPNNEDMVAKGMVLYMNRNTKTTNGYYYVDVTKDEDEGKPHDNEKRYPVKMVDNKIIPTKEIKDEKIKKEIENFKFFVQYGDFKNLKNYKDGDISYNPEVPSYSAKYQLTNDDYNVKQLRKRYDIPTSKAPKLLLKGSGNLKGSSVGYKDIEFTFVEKKEENIYFSDSLDYKKSGDV.

Positions 1–23 are cleaved as a signal peptide; the sequence is MKRLNKLVLGIIFLFLVISITAG. Cys24 is lipidated: N-palmitoyl cysteine. Cys24 is lipidated: S-diacylglycerol cysteine.

Belongs to the staphylococcal tandem lipoprotein family.

It localises to the cell membrane. This is an uncharacterized protein from Staphylococcus aureus (strain USA300).